Here is a 335-residue protein sequence, read N- to C-terminus: Antigen-presenting glycoprotein CD1d (335 aa).

An N-terminal signal peptide occupies residues 1–19; that stretch reads MGCLLFLLLWALLQAWGSA. At 20 to 301 the chain is on the extracellular side; it reads EVPQRLFPLR…VLYWGGSYTS (282 aa). Asparagine 38 and asparagine 60 each carry an N-linked (GlcNAc...) asparagine glycan. A D-galactosylceramide is bound at residue aspartate 98. Disulfide bonds link cysteine 120-cysteine 184 and cysteine 224-cysteine 279. The N-linked (GlcNAc...) asparagine glycan is linked to asparagine 126. 169–172 is a binding site for a D-galactosylceramide; the sequence is DKWT. Asparagine 181 is a glycosylation site (N-linked (GlcNAc...) asparagine). In terms of domain architecture, Ig-like spans 185 to 292; sequence PQFVSGLLES…HSSLEGQDIV (108 aa). Residues 302–322 form a helical membrane-spanning segment; sequence MGLIALAVLACLLFLLIVGFT. The Cytoplasmic segment spans residues 323–335; that stretch reads SRFKRQTSYQGVL. The short motif at 331–334 is the Internalization signal element; that stretch reads YQGV.

In terms of assembly, heterodimer with B2M (beta-2-microglobulin). Interacts with MHC II. In terms of tissue distribution, expressed on cortical thymocytes, on certain T-cell leukemias, and in various other tissues.

The protein resides in the cell membrane. Its subcellular location is the basolateral cell membrane. It localises to the endosome membrane. The protein localises to the lysosome membrane. It is found in the endoplasmic reticulum membrane. Antigen-presenting protein that binds self and non-self glycolipids and presents them to T-cell receptors on natural killer T-cells. In Homo sapiens (Human), this protein is Antigen-presenting glycoprotein CD1d (CD1D).